A 386-amino-acid polypeptide reads, in one-letter code: Succinate--CoA ligase [ADP-forming] subunit beta (386 aa).

Residues 9–244 form the ATP-grasp domain; sequence KEILRKYGVP…HDEEDPLETR (236 aa). ATP is bound by residues K46, 53-55, E99, C102, and E107; that span reads GRG. Residues N199 and D213 each coordinate Mg(2+). Substrate is bound by residues N264 and 321–323; that span reads GIM.

Belongs to the succinate/malate CoA ligase beta subunit family. As to quaternary structure, heterotetramer of two alpha and two beta subunits. Mg(2+) serves as cofactor.

The catalysed reaction is succinate + ATP + CoA = succinyl-CoA + ADP + phosphate. The enzyme catalyses GTP + succinate + CoA = succinyl-CoA + GDP + phosphate. The protein operates within carbohydrate metabolism; tricarboxylic acid cycle; succinate from succinyl-CoA (ligase route): step 1/1. Functionally, succinyl-CoA synthetase functions in the citric acid cycle (TCA), coupling the hydrolysis of succinyl-CoA to the synthesis of either ATP or GTP and thus represents the only step of substrate-level phosphorylation in the TCA. The beta subunit provides nucleotide specificity of the enzyme and binds the substrate succinate, while the binding sites for coenzyme A and phosphate are found in the alpha subunit. This is Succinate--CoA ligase [ADP-forming] subunit beta from Rickettsia peacockii (strain Rustic).